Reading from the N-terminus, the 215-residue chain is 3-dehydroquinate dehydratase (215 aa).

3-dehydroquinate contacts are provided by residues 27–29 (EVR) and arginine 54. The active-site Proton donor/acceptor is the histidine 112. The active-site Schiff-base intermediate with substrate is the lysine 139. The 3-dehydroquinate site is built by arginine 176 and glutamine 198.

It belongs to the type-I 3-dehydroquinase family. As to quaternary structure, homodimer.

The catalysed reaction is 3-dehydroquinate = 3-dehydroshikimate + H2O. The protein operates within metabolic intermediate biosynthesis; chorismate biosynthesis; chorismate from D-erythrose 4-phosphate and phosphoenolpyruvate: step 3/7. In terms of biological role, involved in the third step of the chorismate pathway, which leads to the biosynthesis of aromatic amino acids. Catalyzes the cis-dehydration of 3-dehydroquinate (DHQ) and introduces the first double bond of the aromatic ring to yield 3-dehydroshikimate. The sequence is that of 3-dehydroquinate dehydratase from Thermococcus onnurineus (strain NA1).